A 136-amino-acid polypeptide reads, in one-letter code: Large ribosomal subunit protein uL22 (136 aa).

It belongs to the universal ribosomal protein uL22 family. Part of the 50S ribosomal subunit.

This protein binds specifically to 23S rRNA; its binding is stimulated by other ribosomal proteins, e.g. L4, L17, and L20. It is important during the early stages of 50S assembly. It makes multiple contacts with different domains of the 23S rRNA in the assembled 50S subunit and ribosome. Its function is as follows. The globular domain of the protein is located near the polypeptide exit tunnel on the outside of the subunit, while an extended beta-hairpin is found that lines the wall of the exit tunnel in the center of the 70S ribosome. The sequence is that of Large ribosomal subunit protein uL22 from Bacteroides fragilis (strain ATCC 25285 / DSM 2151 / CCUG 4856 / JCM 11019 / LMG 10263 / NCTC 9343 / Onslow / VPI 2553 / EN-2).